The chain runs to 157 residues: uncharacterized protein (157 aa).

Residues 9-154 form the N-acetyltransferase domain; that stretch reads LLINYKTLDE…ETNLNAVTNE (146 aa).

This is an uncharacterized protein from Bacillus cereus (strain ATCC 14579 / DSM 31 / CCUG 7414 / JCM 2152 / NBRC 15305 / NCIMB 9373 / NCTC 2599 / NRRL B-3711).